The sequence spans 230 residues: Small ribosomal subunit protein uS3 (230 aa).

The region spanning 39–107 (VRNYLRQKLA…PIHVNIEEIR (69 aa)) is the KH type-2 domain. The segment at 210–230 (SSKPEHESKQRKAGRRNAAAN) is disordered.

Belongs to the universal ribosomal protein uS3 family. In terms of assembly, part of the 30S ribosomal subunit. Forms a tight complex with proteins S10 and S14.

Its function is as follows. Binds the lower part of the 30S subunit head. Binds mRNA in the 70S ribosome, positioning it for translation. The chain is Small ribosomal subunit protein uS3 from Neisseria gonorrhoeae (strain ATCC 700825 / FA 1090).